The chain runs to 384 residues: tRNA-specific 2-thiouridylase MnmA (384 aa).

ATP-binding positions include 9–16 (GMSGGVDS) and Met35. The interval 95–97 (NPD) is interaction with target base in tRNA. Residue Cys100 is the Nucleophile of the active site. Cys100 and Cys196 are oxidised to a cystine. Gly124 lines the ATP pocket. An interaction with tRNA region spans residues 146–148 (KDQ). Cys196 functions as the Cysteine persulfide intermediate in the catalytic mechanism. The tract at residues 308-309 (RY) is interaction with tRNA.

This sequence belongs to the MnmA/TRMU family.

Its subcellular location is the cytoplasm. The catalysed reaction is S-sulfanyl-L-cysteinyl-[protein] + uridine(34) in tRNA + AH2 + ATP = 2-thiouridine(34) in tRNA + L-cysteinyl-[protein] + A + AMP + diphosphate + H(+). Catalyzes the 2-thiolation of uridine at the wobble position (U34) of tRNA, leading to the formation of s(2)U34. The protein is tRNA-specific 2-thiouridylase MnmA of Burkholderia ambifaria (strain ATCC BAA-244 / DSM 16087 / CCUG 44356 / LMG 19182 / AMMD) (Burkholderia cepacia (strain AMMD)).